The following is a 421-amino-acid chain: Outer capsid protein P8 (421 aa).

Belongs to the phytoreovirus outer capsid protein P8 family. In terms of assembly, homotrimer. Homomultimer. Interacts with host peroxisomal glycolate oxidase (GOX). This interaction mediates its relocation to virus factories peripheral to host peroxisomes.

The protein resides in the virion. It is found in the host cytoplasm. Functionally, capsid protein which self-assembles to form the outer icosahedral capsid with a T=13 symmetry, about 70 nm in diameter and consisting of 780 molecules capsid proteins. The chain is Outer capsid protein P8 from Alopecurus aequalis (Barnyard grass).